Consider the following 67-residue polypeptide: UPF0435 protein SSP0913 (67 aa).

The protein belongs to the UPF0435 family.

This chain is UPF0435 protein SSP0913, found in Staphylococcus saprophyticus subsp. saprophyticus (strain ATCC 15305 / DSM 20229 / NCIMB 8711 / NCTC 7292 / S-41).